The sequence spans 324 residues: Probable fructokinase-5 (324 aa).

Belongs to the carbohydrate kinase PfkB family.

It catalyses the reaction D-fructose + ATP = D-fructose 6-phosphate + ADP + H(+). The protein operates within glycan biosynthesis; starch biosynthesis. Functionally, may play an important role in maintaining the flux of carbon towards starch formation. In Arabidopsis thaliana (Mouse-ear cress), this protein is Probable fructokinase-5.